The chain runs to 417 residues: Gamma-glutamyl phosphate reductase (417 aa).

This sequence belongs to the gamma-glutamyl phosphate reductase family.

Its subcellular location is the cytoplasm. It carries out the reaction L-glutamate 5-semialdehyde + phosphate + NADP(+) = L-glutamyl 5-phosphate + NADPH + H(+). It participates in amino-acid biosynthesis; L-proline biosynthesis; L-glutamate 5-semialdehyde from L-glutamate: step 2/2. In terms of biological role, catalyzes the NADPH-dependent reduction of L-glutamate 5-phosphate into L-glutamate 5-semialdehyde and phosphate. The product spontaneously undergoes cyclization to form 1-pyrroline-5-carboxylate. The chain is Gamma-glutamyl phosphate reductase from Escherichia coli (strain SMS-3-5 / SECEC).